Here is a 95-residue protein sequence, read N- to C-terminus: Ribonuclease P protein component 1 (95 aa).

Belongs to the eukaryotic/archaeal RNase P protein component 1 family. In terms of assembly, consists of a catalytic RNA component and at least 4 protein subunits. Forms a subcomplex with Rnp4 which stimulates the catalytic RNA.

Its subcellular location is the cytoplasm. The enzyme catalyses Endonucleolytic cleavage of RNA, removing 5'-extranucleotides from tRNA precursor.. Its function is as follows. Part of ribonuclease P, a protein complex that generates mature tRNA molecules by cleaving their 5'-ends. This Methanocaldococcus jannaschii (strain ATCC 43067 / DSM 2661 / JAL-1 / JCM 10045 / NBRC 100440) (Methanococcus jannaschii) protein is Ribonuclease P protein component 1.